The sequence spans 454 residues: Lamina-associated polypeptide 2, isoforms beta/gamma (454 aa).

A nucleoplasmic region spans residues 1–410 (MPEFLEDPSV…KSEKTKKGRS (410 aa)). Positions 5–48 (LEDPSVLTKDKLKSELVANNVTLPAGEQRKDVYVQLYLQHLTAR) constitute an LEM-like domain. 2 disordered regions span residues 47 to 117 (ARNR…ELTN) and 149 to 265 (LREQ…VETS). Residues 49–108 (NRPPLPAGTNSKGPPDFSSDEEREPTPVLGSGAAAAGRSRAAVGRKATKKTDKPRQEDKD) are linker. T57 bears the Phosphothreonine mark. Phosphoserine is present on residues S59, S66, and S67. Phosphothreonine is present on T74. Positions 78–93 (GSGAAAAGRSRAAVGR) are enriched in low complexity. S79 carries the phosphoserine modification. R86 and R88 each carry omega-N-methylarginine. Residues 97–106 (KKTDKPRQED) are compositionally biased toward basic and acidic residues. Residues 107 to 117 (KDDLDVTELTN) are compositionally biased toward acidic residues. The 45-residue stretch at 109-153 (DLDVTELTNEDLLDQLVKYGVNPGPIVGTTRKLYEKKLLKLREQG) folds into the LEM domain. An NAKAP95-binding N region spans residues 138-243 (TRKLYEKKLL…TSGSSKGGPL (106 aa)). The residue at position 154 (T154) is a Phosphothreonine. Over residues 155 to 178 (ESRSSTPLPTISSSAENTRQNGSN) the composition is skewed to polar residues. 2 positions are modified to phosphoserine: S156 and S159. 2 positions are modified to phosphothreonine: T160 and T164. Phosphoserine is present on residues S166, S168, S177, S180, S184, and S190. Positions 179–203 (DSDRYSDNEEDSKIELKLEKREPLK) are enriched in basic and acidic residues. Position 207 is an N6-acetyllysine (K207). The residue at position 211 (T211) is a Phosphothreonine. Positions 220–237 (NQSYSQAGITETEWTSGS) are enriched in polar residues. Residues S222, S224, S250, S254, S265, S292, and S306 each carry the phosphoserine modification. Residues 299 to 371 (TGNFKHASPI…SCRRPIKGAA (73 aa)) form a binds lamins B region. The NAKAP95-binding C stretch occupies residues 300 to 374 (GNFKHASPIL…RPIKGAAGRP (75 aa)). At T312 the chain carries Phosphothreonine. The residue at position 315 (S315) is a Phosphoserine. Position 320 is a citrulline (R320). A phosphoserine mark is found at S362, S378, and S385. Position 389 is an N6-acetyllysine (K389). K401 is covalently cross-linked (Glycyl lysine isopeptide (Lys-Gly) (interchain with G-Cter in SUMO2)). At S402 the chain carries Phosphoserine. A helical; Signal-anchor for type II membrane protein membrane pass occupies residues 411–434 (IPVWIKILLFVVVAVFLFLVYQAM). Over 435–454 (ETNQVNPFSNFLHVDPRKSN) the chain is Lumenal.

This sequence belongs to the LEM family. In terms of assembly, interacts with LMNB1, LMNB2, BANF1, AKAP8L, GMCL and chromosomes. Isoform Zeta interacts with BANF1/BAF and may sequester it in the cytoplasm. In terms of processing, mitosis-specific phosphorylation specifically abolishes its binding to lamin B and chromosomes. Post-translationally, citrullinated by PADI4. In terms of tissue distribution, expressed in many tissues. Most abundant in adult thymus and fetal liver.

It localises to the nucleus inner membrane. Its subcellular location is the cytoplasm. May help direct the assembly of the nuclear lamina and thereby help maintain the structural organization of the nuclear envelope. Possible receptor for attachment of lamin filaments to the inner nuclear membrane. May be involved in the control of initiation of DNA replication through its interaction with NAKAP95. In terms of biological role, thymopoietin (TP) and Thymopentin (TP5) may play a role in T-cell development and function. TP5 is an immunomodulating pentapeptide. This is Lamina-associated polypeptide 2, isoforms beta/gamma (TMPO) from Homo sapiens (Human).